Consider the following 160-residue polypeptide: Iron-sulfur assembly protein IscA1 (160 aa).

The protein belongs to the HesB/IscA family. In terms of assembly, tetramer.

It localises to the mitochondrion. The protein operates within cofactor biosynthesis; iron-sulfur cluster biosynthesis. Participates in iron-sulfur cluster formation (ISC) pathway for iron-sulfur (Fe-S) cluster biogenesis. Can bind iron and [4Fe-4S] clusters. May function as an iron chaperone. This Plasmodium falciparum (isolate 3D7) protein is Iron-sulfur assembly protein IscA1.